Reading from the N-terminus, the 275-residue chain is Diaminopimelate epimerase (275 aa).

Substrate contacts are provided by asparagine 12, glutamine 45, and asparagine 65. Cysteine 74 acts as the Proton donor in catalysis. Substrate contacts are provided by residues 75 to 76 (GN), asparagine 158, asparagine 191, and 209 to 210 (ER). The active-site Proton acceptor is cysteine 218. Position 219–220 (219–220 (GT)) interacts with substrate.

This sequence belongs to the diaminopimelate epimerase family. Homodimer.

It is found in the cytoplasm. The enzyme catalyses (2S,6S)-2,6-diaminopimelate = meso-2,6-diaminopimelate. Its pathway is amino-acid biosynthesis; L-lysine biosynthesis via DAP pathway; DL-2,6-diaminopimelate from LL-2,6-diaminopimelate: step 1/1. In terms of biological role, catalyzes the stereoinversion of LL-2,6-diaminopimelate (L,L-DAP) to meso-diaminopimelate (meso-DAP), a precursor of L-lysine and an essential component of the bacterial peptidoglycan. The chain is Diaminopimelate epimerase from Shewanella sp. (strain MR-4).